The following is a 336-amino-acid chain: Dihydroorotate dehydrogenase (quinone) (336 aa).

FMN-binding positions include 62 to 66 (AGLDK) and Thr-86. Lys-66 is a substrate binding site. Substrate is bound at residue 111–115 (NRMGF). The FMN site is built by Asn-139 and Asn-172. Asn-172 lines the substrate pocket. Ser-175 functions as the Nucleophile in the catalytic mechanism. Residue Asn-177 coordinates substrate. Residues Lys-217 and Thr-245 each coordinate FMN. Position 246 to 247 (246 to 247 (NT)) interacts with substrate. FMN is bound by residues Gly-268, Gly-297, and 318–319 (YS).

Belongs to the dihydroorotate dehydrogenase family. Type 2 subfamily. Monomer. The cofactor is FMN.

It is found in the cell membrane. It catalyses the reaction (S)-dihydroorotate + a quinone = orotate + a quinol. The protein operates within pyrimidine metabolism; UMP biosynthesis via de novo pathway; orotate from (S)-dihydroorotate (quinone route): step 1/1. Functionally, catalyzes the conversion of dihydroorotate to orotate with quinone as electron acceptor. This is Dihydroorotate dehydrogenase (quinone) from Serratia proteamaculans (strain 568).